We begin with the raw amino-acid sequence, 877 residues long: Polycomb protein Scm (877 aa).

The segment at 1–57 (MSGGRDSSTSSGSNSAAPGASTNATSSASASASSTSTSASPGSTTSPASTQRQRGRP) is disordered. Residues 7-50 (SSTSSGSNSAAPGASTNATSSASASASSTSTSASPGSTTSPAST) show a composition bias toward low complexity. An FCS-type zinc finger spans residues 54–93 (RGRPAKRATCTWCGEGKLPLQYVLPTQTGKKEFCSETCIA). Residues C63, C66, C87, and C91 each coordinate Zn(2+). MBT repeat units lie at residues 175–273 (FDWD…LQPP) and 281–382 (SSWP…MQPP). 3 disordered regions span residues 535–621 (NSRK…SNKV), 652–692 (TNTN…GGSA), and 713–735 (ANVK…ASLP). T546 carries the post-translational modification Phosphothreonine. 2 positions are modified to phosphoserine: S549 and S550. Polar residues predominate over residues 560–569 (QSNSATTSPS). S585 carries the post-translational modification Phosphoserine. A compositionally biased stretch (low complexity) spans 598–620 (ASQQNSNHSLNNNNNSASKSSNK). Over residues 724-735 (SPTTLSSSASLP) the composition is skewed to low complexity. Positions 806-876 (WTIEEVIQYI…KVNGRRNNLA (71 aa)) constitute an SAM domain.

It belongs to the SCM family. In terms of assembly, scm associates with the PRC1 core complex containing PSC, PC, PH and Sce/RING1. Forms homotypic and heterotypic interactions. Interacts with the SAM domain of ph-p via its SAM domain in vitro. Interacts with corto in vitro.

The protein localises to the nucleus. Its function is as follows. Polycomb group (PcG) protein. PcG proteins act by forming multiprotein complexes, which are required to maintain the transcriptionally repressive state of homeotic genes throughout development. PcG proteins are not required to initiate repression, but to maintain it during later stages of development. They probably act via the methylation of histones, rendering chromatin heritably changed in its expressibility. This chain is Polycomb protein Scm, found in Drosophila melanogaster (Fruit fly).